The following is a 252-amino-acid chain: tRNA (guanine-N(1)-)-methyltransferase (252 aa).

Residues Gly116 and 135 to 140 each bind S-adenosyl-L-methionine; that span reads LGDYVL.

It belongs to the RNA methyltransferase TrmD family. In terms of assembly, homodimer.

It is found in the cytoplasm. It catalyses the reaction guanosine(37) in tRNA + S-adenosyl-L-methionine = N(1)-methylguanosine(37) in tRNA + S-adenosyl-L-homocysteine + H(+). Its function is as follows. Specifically methylates guanosine-37 in various tRNAs. This is tRNA (guanine-N(1)-)-methyltransferase from Limosilactobacillus reuteri (strain DSM 20016) (Lactobacillus reuteri).